A 176-amino-acid polypeptide reads, in one-letter code: ATP-dependent protease subunit HslV (176 aa).

T2 is a catalytic residue. G157, C160, and T163 together coordinate Na(+).

Belongs to the peptidase T1B family. HslV subfamily. As to quaternary structure, a double ring-shaped homohexamer of HslV is capped on each side by a ring-shaped HslU homohexamer. The assembly of the HslU/HslV complex is dependent on binding of ATP.

It is found in the cytoplasm. It catalyses the reaction ATP-dependent cleavage of peptide bonds with broad specificity.. With respect to regulation, allosterically activated by HslU binding. Protease subunit of a proteasome-like degradation complex believed to be a general protein degrading machinery. In Salmonella gallinarum (strain 287/91 / NCTC 13346), this protein is ATP-dependent protease subunit HslV.